A 425-amino-acid polypeptide reads, in one-letter code: UPF0761 membrane protein XC_3370 (425 aa).

A run of 6 helical transmembrane segments spans residues 48–68 (VFALVPLAIVVFGVLSAFPAF), 105–125 (FTVAGMVALVASLLITLHSIE), 154–174 (GTMLAAASMAMAAYVFALPLF), 182–202 (LAEFAWRLAPMAVEFVCIVLI), 216–236 (ALPGALLAVILMEIVKWGFGF), and 250–270 (ALSALPILLLWIYLSWVSVLL).

Belongs to the UPF0761 family.

The protein resides in the cell inner membrane. This chain is UPF0761 membrane protein XC_3370, found in Xanthomonas campestris pv. campestris (strain 8004).